Reading from the N-terminus, the 519-residue chain is Cytochrome P450 52A13 (519 aa).

Cys466 contacts heme.

The protein belongs to the cytochrome P450 family. Heme is required as a cofactor.

It localises to the membrane. Its function is as follows. Together with an NADPH cytochrome P450 the enzyme system catalyzes the terminal hydroxylation as the first step in the assimilation of alkanes and fatty acids. The sequence is that of Cytochrome P450 52A13 (CYP52A13) from Debaryomyces hansenii (Yeast).